The chain runs to 338 residues: Putative peptide import ATP-binding protein BruAb2_0796 (338 aa).

Residues 7-263 (LDIEGLRTVF…PRHPYTMGLL (257 aa)) enclose the ABC transporter domain. 43–50 (GESGSGKS) provides a ligand contact to ATP.

It belongs to the ABC transporter superfamily. In terms of assembly, the complex is composed of two ATP-binding proteins (BruAb2_0796 and BruAb2_0797), two transmembrane proteins (BruAb2_0794) and a solute-binding protein (BruAb2_0792).

It localises to the cell inner membrane. Its function is as follows. Probably part of an ABC transporter complex that could be involved in peptide import. Probably responsible for energy coupling to the transport system. The chain is Putative peptide import ATP-binding protein BruAb2_0796 from Brucella abortus biovar 1 (strain 9-941).